We begin with the raw amino-acid sequence, 209 residues long: Mitotic spindle checkpoint protein MAD2 (209 aa).

The 184-residue stretch at 15 to 198 (HGSAAIVSEF…TKIHKVDTLV (184 aa)) folds into the HORMA domain.

Belongs to the MAD2 family. In terms of assembly, part of the mitotic checkpoint complex (MCC); interacts with MAD1, CDC20-1, CDC20-2 and CDC20-5. Interacts with BUBR1 at chromocenters and with BUB3.1. Interacts with EIF4B3. As to expression, expressed in actively dividing tissues, early in organ development, in young leaves, lateral root primordia and root meristems.

It localises to the nucleus. It is found in the nucleus envelope. Its subcellular location is the chromosome. The protein localises to the centromere. The protein resides in the kinetochore. It localises to the cytoplasm. It is found in the cytoskeleton. Its subcellular location is the spindle. Functionally, required for the execution of the mitotic checkpoint which monitors the process of kinetochore-spindle attachment and delays the onset of anaphase when this process is not complete. It inhibits the activity of the anaphase promoting complex by sequestering CDC20 until all chromosomes are aligned at the metaphase plate. This Arabidopsis thaliana (Mouse-ear cress) protein is Mitotic spindle checkpoint protein MAD2.